Here is a 231-residue protein sequence, read N- to C-terminus: Platelet-activating factor acetylhydrolase IB subunit alpha1 (231 aa).

Serine 2 is subject to N-acetylserine. Serine 2 carries the post-translational modification Phosphoserine. Active-site residues include serine 47, aspartate 192, and histidine 195.

It belongs to the 'GDSL' lipolytic enzyme family. Platelet-activating factor acetylhydrolase IB beta/gamma subunits subfamily. In terms of assembly, forms a catalytic dimer which is either homodimer (alpha1/alpha1 homodimer) or heterodimer with PAFAH1B2 (alpha1/alpha2 heterodimer). Component of the cytosolic (PAF-AH (I)) heterotetrameric enzyme, which is composed of PAFAH1B1 (beta), PAFAH1B2 (alpha2) and PAFAH1B3 (alpha1) subunits. The catalytic activity of the enzyme resides in the alpha1 (PAFAH1B3) and alpha2 (PAFAH1B2) subunits, whereas the beta subunit (PAFAH1B1) has regulatory activity. Trimer formation is not essential for the catalytic activity. Interacts with VLDLR; this interaction may modulate the Reelin pathway.

It is found in the cytoplasm. The catalysed reaction is a 1-O-alkyl-2-acetyl-sn-glycero-3-phosphocholine + H2O = a 1-O-alkyl-sn-glycero-3-phosphocholine + acetate + H(+). It carries out the reaction 1-O-hexadecyl-2-acetyl-sn-glycero-3-phosphocholine + H2O = 1-O-hexadecyl-sn-glycero-3-phosphocholine + acetate + H(+). The enzyme catalyses 1-O-hexadecyl-2-acetyl-sn-glycero-3-phosphate + H2O = 1-O-hexadecyl-sn-glycero-3-phosphate + acetate + H(+). Its activity is regulated as follows. Beta subunit (PAFAH1B1) inhibits the acetylhydrolase activity of the alpha1/alpha1 catalytic homodimer. Its function is as follows. Alpha1 catalytic subunit of the cytosolic type I platelet-activating factor (PAF) acetylhydrolase (PAF-AH (I)) heterotetrameric enzyme that catalyzes the hydrolyze of the acetyl group at the sn-2 position of PAF and its analogs and modulates the action of PAF. The activity and substrate specificity of PAF-AH (I) are affected by its subunit composition. Both alpha1/alpha1 homodimer (PAFAH1B3/PAFAH1B3 homodimer) and alpha1/alpha2 heterodimer(PAFAH1B3/PAFAH1B2 heterodimer) hydrolyze 1-O-alkyl-2-acetyl-sn-glycero-3-phosphoric acid (AAGPA) more efficiently than PAF, but they have little hydrolytic activity towards 1-O-alkyl-2-acetyl-sn-glycero-3-phosphorylethanolamine (AAGPE). Plays an important role during the development of brain. In Pongo abelii (Sumatran orangutan), this protein is Platelet-activating factor acetylhydrolase IB subunit alpha1.